We begin with the raw amino-acid sequence, 156 residues long: ATP synthase subunit b (156 aa).

The helical transmembrane segment at 7-27 (LFVQAIVFLILVLFTMKFVWP) threads the bilayer.

This sequence belongs to the ATPase B chain family. As to quaternary structure, F-type ATPases have 2 components, F(1) - the catalytic core - and F(0) - the membrane proton channel. F(1) has five subunits: alpha(3), beta(3), gamma(1), delta(1), epsilon(1). F(0) has three main subunits: a(1), b(2) and c(10-14). The alpha and beta chains form an alternating ring which encloses part of the gamma chain. F(1) is attached to F(0) by a central stalk formed by the gamma and epsilon chains, while a peripheral stalk is formed by the delta and b chains.

It localises to the cell inner membrane. Its function is as follows. F(1)F(0) ATP synthase produces ATP from ADP in the presence of a proton or sodium gradient. F-type ATPases consist of two structural domains, F(1) containing the extramembraneous catalytic core and F(0) containing the membrane proton channel, linked together by a central stalk and a peripheral stalk. During catalysis, ATP synthesis in the catalytic domain of F(1) is coupled via a rotary mechanism of the central stalk subunits to proton translocation. Functionally, component of the F(0) channel, it forms part of the peripheral stalk, linking F(1) to F(0). This Acidovorax sp. (strain JS42) protein is ATP synthase subunit b.